We begin with the raw amino-acid sequence, 254 residues long: PAXIP1-associated glutamate-rich protein 1 (254 aa).

Disordered regions lie at residues 1-111 (MSLA…PPSE) and 127-254 (LQAE…QRKY). Residues 45-62 (KAEDEGEGGREETEREGS) show a composition bias toward basic and acidic residues. The span at 78-98 (EPAEEDSEDWCVPCSDEEVEL) shows a compositional bias: acidic residues. Residues 116–160 (YELLAAHGTLELQAEILPRRPPTPEAQSEEERSDEEPEAKEEEEE) form a sufficient for interaction with NCOA1 region. Position 138 is a phosphothreonine (Thr138). Acidic residues predominate over residues 142-159 (QSEEERSDEEPEAKEEEE). A phosphoserine mark is found at Ser143 and Ser148. The interval 161 to 254 (KPHMPTEFDF…SSLFPRQRKY (94 aa)) is sufficient for interaction with ESR1. Basic and acidic residues predominate over residues 195-223 (QKREARLDKVLSDMKRHKKLEEQILRTGR). Phosphoserine is present on Ser237.

Component of the KMT2 family MLL2/MLL3 complex (also named ASCOM complex), at least composed of the HMTs KMT2D and/or KMT2C, the common subunits ASH2L, RBBP5, WDR5 and DPY30, and the complex type-specific subunits PAXIP1/PTIP, PAGR1, NCOA6 and KDM6A; PAXIP1 is required for the association with the MLL2/MLL3 complex. Forms a constitutive complex with PAXIP1/PTIP independently of the MLL2/MLL3 complex. Interacts with NCOA1, ESR1, NR3C1, AR. In terms of tissue distribution, ubiquitously expressed.

It is found in the nucleus. Its association with the histone methyltransferase MLL2/MLL3 complex is suggesting a role in epigenetic transcriptional activation. However, in association with PAXIP1/PTIP is proposed to function at least in part independently of the MLL2/MLL3 complex. Proposed to be recruited by PAXIP1 to sites of DNA damage where the PAGR1:PAXIP1 complex is required for cell survival in response to DNA damage independently of the MLL2/MLL3 complex. However, its function in DNA damage has been questioned. During immunoglobulin class switching in activated B-cells is involved in transcription regulation of downstream switch regions at the immunoglobulin heavy-chain (Igh) locus independently of the MLL2/MLL3 complex. Involved in both estrogen receptor-regulated gene transcription and estrogen-stimulated G1/S cell-cycle transition. Acts as a transcriptional cofactor for nuclear hormone receptors. Inhibits the induction properties of several steroid receptors such as NR3C1, AR and PPARG; the mechanism of inhibition appears to be gene-dependent. The protein is PAXIP1-associated glutamate-rich protein 1 (PAGR1) of Homo sapiens (Human).